The primary structure comprises 359 residues: Very-long-chain (3R)-3-hydroxyacyl-CoA dehydratase (359 aa).

Residues Met1 to Lys144 lie on the Cytoplasmic side of the membrane. Residues Ala3–Thr92 form the CS domain. A coiled-coil region spans residues Leu109–Arg133. A helical transmembrane segment spans residues Gly145–Met165. Residues Thr166 to Asp186 lie on the Lumenal side of the membrane. The helical transmembrane segment at Val187–Val207 threads the bilayer. The Cytoplasmic segment spans residues Lys208–Thr209. The helical transmembrane segment at Gly210–Gly230 threads the bilayer. The Lumenal portion of the chain corresponds to Ser231–Pro239. The helical transmembrane segment at Val240–Met260 threads the bilayer. Topologically, residues Leu261–Thr277 are cytoplasmic. The helical transmembrane segment at Ile278–Ile298 threads the bilayer. Catalysis depends on residues Tyr283 and Glu290. Over Pro299–Leu317 the chain is Lumenal. A helical membrane pass occupies residues Ser318–Ile338. Topologically, residues Asn339–Asn359 are cytoplasmic.

It belongs to the very long-chain fatty acids dehydratase HACD family.

It is found in the endoplasmic reticulum membrane. The enzyme catalyses a very-long-chain (3R)-3-hydroxyacyl-CoA = a very-long-chain (2E)-enoyl-CoA + H2O. It catalyses the reaction (3R)-hydroxyhexadecanoyl-CoA = (2E)-hexadecenoyl-CoA + H2O. It participates in lipid metabolism; fatty acid biosynthesis. Its function is as follows. Catalyzes the third of the four reactions of the long-chain fatty acids elongation cycle. This endoplasmic reticulum-bound enzymatic process, allows the addition of two carbons to the chain of long- and very long-chain fatty acids/VLCFAs per cycle. This enzyme catalyzes the dehydration of the 3-hydroxyacyl-CoA intermediate into trans-2,3-enoyl-CoA, within each cycle of fatty acid elongation. Thereby, it participates in the production of VLCFAs of different chain lengths that are involved in multiple biological processes as precursors of membrane lipids and lipid mediators. Involved in Rac1-signaling pathways leading to the modulation of gene expression. The polypeptide is Very-long-chain (3R)-3-hydroxyacyl-CoA dehydratase (Danio rerio (Zebrafish)).